Reading from the N-terminus, the 399-residue chain is Insertion element IS116 uncharacterized 44.8 kDa protein (399 aa).

Belongs to the transposase IS1111A/IS1328/IS1533 family.

This chain is Insertion element IS116 uncharacterized 44.8 kDa protein, found in Streptomyces clavuligerus.